A 124-amino-acid chain; its full sequence is UPF0344 protein OB1184 (124 aa).

Transmembrane regions (helical) follow at residues 3–23 (HMHITSWALGLILFIIALVMY), 33–53 (IIHMILRLMFILIIITGGILT), 62–82 (MPILGEALVKALAGLWLVAMM), and 104–124 (IALVLVIVLGFFRLPMGFLFI).

It belongs to the UPF0344 family.

The protein resides in the cell membrane. The polypeptide is UPF0344 protein OB1184 (Oceanobacillus iheyensis (strain DSM 14371 / CIP 107618 / JCM 11309 / KCTC 3954 / HTE831)).